We begin with the raw amino-acid sequence, 205 residues long: Small ribosomal subunit protein uS4 (205 aa).

The segment at 1–46 is disordered; sequence MSKRHSAKYKIDRRMGENLWGRPKSPVNQRSYGPGQHGQRRKQKVS. Residues 94-154 enclose the S4 RNA-binding domain; the sequence is SRLDAIVYRA…EKSRNMALVL (61 aa).

This sequence belongs to the universal ribosomal protein uS4 family. In terms of assembly, part of the 30S ribosomal subunit. Contacts protein S5. The interaction surface between S4 and S5 is involved in control of translational fidelity.

Its function is as follows. One of the primary rRNA binding proteins, it binds directly to 16S rRNA where it nucleates assembly of the body of the 30S subunit. In terms of biological role, with S5 and S12 plays an important role in translational accuracy. This Caulobacter sp. (strain K31) protein is Small ribosomal subunit protein uS4.